The chain runs to 159 residues: Large ribosomal subunit protein mL43 (159 aa).

The disordered stretch occupies residues 123–159 (SPSIQGQWHPFTNKPTALGGLRPREVQNPAPTQRPAQ).

It belongs to the mitochondrion-specific ribosomal protein mL43 family. In terms of assembly, component of the mitochondrial ribosome large subunit (39S) which comprises a 16S rRNA and about 50 distinct proteins.

It localises to the mitochondrion. This chain is Large ribosomal subunit protein mL43 (MRPL43), found in Bos taurus (Bovine).